A 366-amino-acid polypeptide reads, in one-letter code: Holliday junction branch migration complex subunit RuvB (366 aa).

The segment at 1–49 (MAIISSKKQPPEPNGQPNKRPESAPAAPKEKVLQPEAAIDEQGKQEESI) is disordered. Positions 13–210 (PNGQPNKRPE…FGLIQKLRFY (198 aa)) are large ATPase domain (RuvB-L). Residues Ile49, Arg50, Gly91, Lys94, Thr95, Thr96, 157 to 159 (EDY), Arg200, Tyr210, and Arg247 contribute to the ATP site. Thr95 is a Mg(2+) binding site. A small ATPAse domain (RuvB-S) region spans residues 211–281 (EVDELSQIVL…IAAEALQLFQ (71 aa)). The head domain (RuvB-H) stretch occupies residues 284-366 (PCGLDWTDRR…TPPNEQLSLL (83 aa)). DNA is bound by residues Arg339 and Arg344.

Belongs to the RuvB family. As to quaternary structure, homohexamer. Forms an RuvA(8)-RuvB(12)-Holliday junction (HJ) complex. HJ DNA is sandwiched between 2 RuvA tetramers; dsDNA enters through RuvA and exits via RuvB. An RuvB hexamer assembles on each DNA strand where it exits the tetramer. Each RuvB hexamer is contacted by two RuvA subunits (via domain III) on 2 adjacent RuvB subunits; this complex drives branch migration. In the full resolvosome a probable DNA-RuvA(4)-RuvB(12)-RuvC(2) complex forms which resolves the HJ.

The protein resides in the cytoplasm. It carries out the reaction ATP + H2O = ADP + phosphate + H(+). The RuvA-RuvB-RuvC complex processes Holliday junction (HJ) DNA during genetic recombination and DNA repair, while the RuvA-RuvB complex plays an important role in the rescue of blocked DNA replication forks via replication fork reversal (RFR). RuvA specifically binds to HJ cruciform DNA, conferring on it an open structure. The RuvB hexamer acts as an ATP-dependent pump, pulling dsDNA into and through the RuvAB complex. RuvB forms 2 homohexamers on either side of HJ DNA bound by 1 or 2 RuvA tetramers; 4 subunits per hexamer contact DNA at a time. Coordinated motions by a converter formed by DNA-disengaged RuvB subunits stimulates ATP hydrolysis and nucleotide exchange. Immobilization of the converter enables RuvB to convert the ATP-contained energy into a lever motion, pulling 2 nucleotides of DNA out of the RuvA tetramer per ATP hydrolyzed, thus driving DNA branch migration. The RuvB motors rotate together with the DNA substrate, which together with the progressing nucleotide cycle form the mechanistic basis for DNA recombination by continuous HJ branch migration. Branch migration allows RuvC to scan DNA until it finds its consensus sequence, where it cleaves and resolves cruciform DNA. This chain is Holliday junction branch migration complex subunit RuvB, found in Trichormus variabilis (strain ATCC 29413 / PCC 7937) (Anabaena variabilis).